Consider the following 294-residue polypeptide: tRNA pseudouridine synthase B (294 aa).

D39 serves as the catalytic Nucleophile.

Belongs to the pseudouridine synthase TruB family. Type 1 subfamily.

The catalysed reaction is uridine(55) in tRNA = pseudouridine(55) in tRNA. Responsible for synthesis of pseudouridine from uracil-55 in the psi GC loop of transfer RNAs. The protein is tRNA pseudouridine synthase B of Streptococcus agalactiae serotype Ia (strain ATCC 27591 / A909 / CDC SS700).